The chain runs to 369 residues: Protein HGH1 homolog (369 aa).

It belongs to the HGH1 family.

The chain is Protein HGH1 homolog from Drosophila melanogaster (Fruit fly).